A 1067-amino-acid chain; its full sequence is Dorsal-ventral patterning protein tolloid (1067 aa).

An N-terminal signal peptide occupies residues Met1–Gly36. Positions Arg37 to Arg136 are excised as a propeptide. Positions Arg136–Ala338 constitute a Peptidase M12A domain. Asn176 carries an N-linked (GlcNAc...) asparagine glycan. 5 disulfide bridges follow: Cys179–Cys337, Cys201–Cys223, Cys203–Cys204, Cys340–Cys390, and Cys417–Cys439. His231 is a binding site for Zn(2+). Glu232 is a catalytic residue. Zn(2+) contacts are provided by His235 and His241. 2 consecutive short sequence motifs (cell attachment site) follow at residues Arg245–Asp247 and Arg325–Asp327. CUB domains follow at residues Cys340 to Val477 and Cys478 to Asp591. N-linked (GlcNAc...) asparagine glycosylation occurs at Asn441. Intrachain disulfides connect Cys478–Cys505, Cys532–Cys554, Cys595–Cys606, Cys602–Cys615, Cys617–Cys630, and Cys634–Cys662. An N-linked (GlcNAc...) asparagine glycan is attached at Asn543. The EGF-like 1; calcium-binding domain maps to Asp591–Glu631. Residues Cys634 to Asp753 enclose the CUB 3 domain. Residues Asn644 and Asn677 are each glycosylated (N-linked (GlcNAc...) asparagine). Intrachain disulfides connect Cys693–Cys716, Cys757–Cys768, Cys764–Cys777, Cys779–Cys792, Cys797–Cys823, Cys850–Cys872, Cys910–Cys940, and Cys967–Cys989. The 41-residue stretch at Asp753–Thr793 folds into the EGF-like 2; calcium-binding domain. An N-linked (GlcNAc...) asparagine glycan is attached at Asn791. CUB domains lie at Cys797–Glu909 and Cys910–Val1026. 2 N-linked (GlcNAc...) asparagine glycosylation sites follow: Asn864 and Asn918.

The cofactor is Zn(2+).

Metalloprotease which cleaves TGF-beta family ligands daw, Actbeta and myo in vitro. Cleavage of daw enhances its signaling activity. Cleaves dorsal-ventral patterning protein sog. Processes sog more efficiently than metalloprotease tld which also cleaves sog. Required for normal dorsal development. TLD may interact physically with DPP-C protein. The chain is Dorsal-ventral patterning protein tolloid (tld) from Drosophila melanogaster (Fruit fly).